Reading from the N-terminus, the 582-residue chain is External alternative NAD(P)H-ubiquinone oxidoreductase B2, mitochondrial (582 aa).

The N-terminal 38 residues, 1–38 (MRNFSVFERFSKAFKDHPSLTRILVVSTISGGGLIAYS), are a transit peptide targeting the mitochondrion. 60–90 (KVVLLGTGWAGTSFLKNLNNSQYEVQIISPR) provides a ligand contact to FAD. 223–259 (LHFVVVGGGPTGVEFAAELHDFVTEDLVSLYPRAKGS) is an NAD(+) binding site. Positions 379-414 (KVMEDVSAIFSKADKDKSGTLTLKEFQEAMDDICVR) constitute an EF-hand domain. The Ca(2+) site is built by Asp-392, Asp-394, Ser-396, Thr-398, and Glu-403. The Microbody targeting signal signature appears at 573-582 (FIFGRDSSSI).

It belongs to the NADH dehydrogenase family. FAD is required as a cofactor. In terms of tissue distribution, mostly expressed in seedlings and roots and, to a lower extent, in cotyledons, leaves, stems, buds and flowers.

It localises to the mitochondrion inner membrane. The protein resides in the peroxisome. The catalysed reaction is a quinone + NADH + H(+) = a quinol + NAD(+). It carries out the reaction a ubiquinone + NADH + H(+) = a ubiquinol + NAD(+). NADPH oxidase activity is stimulated by calcium ions. In terms of biological role, alternative NADH-ubiquinone oxidoreductase which catalyzes the oxidation of mitochondrial NADH does not translocate protons across the inner mitochondrial membrane. Calcium-dependent NAD(P)H dehydrogenase; more efficient on NADH. Binds calcium ions. This Arabidopsis thaliana (Mouse-ear cress) protein is External alternative NAD(P)H-ubiquinone oxidoreductase B2, mitochondrial (NDB2).